The sequence spans 198 residues: Transcriptional regulator GfcR (198 aa).

This sequence belongs to the purine/pyrimidine phosphoribosyltransferase family. GfcR subfamily.

The sequence is that of Transcriptional regulator GfcR from Thermoplasma acidophilum (strain ATCC 25905 / DSM 1728 / JCM 9062 / NBRC 15155 / AMRC-C165).